The sequence spans 370 residues: Cyclic dehypoxanthine futalosine synthase (370 aa).

A Radical SAM core domain is found at 50 to 295 (TTFVIGRNVN…QSSWVTMGPE (246 aa)). [4Fe-4S] cluster-binding residues include cysteine 64, cysteine 68, and cysteine 71.

The protein belongs to the radical SAM superfamily. MqnC family. The cofactor is [4Fe-4S] cluster.

It catalyses the reaction dehypoxanthine futalosine + S-adenosyl-L-methionine = cyclic dehypoxanthinylfutalosinate + 5'-deoxyadenosine + L-methionine + H(+). It participates in quinol/quinone metabolism; menaquinone biosynthesis. Its function is as follows. Radical SAM enzyme that catalyzes the cyclization of dehypoxanthine futalosine (DHFL) into cyclic dehypoxanthine futalosine (CDHFL), a step in the biosynthesis of menaquinone (MK, vitamin K2). This chain is Cyclic dehypoxanthine futalosine synthase, found in Halalkalibacterium halodurans (strain ATCC BAA-125 / DSM 18197 / FERM 7344 / JCM 9153 / C-125) (Bacillus halodurans).